A 407-amino-acid polypeptide reads, in one-letter code: uncharacterized protein (407 aa).

Transmembrane regions (helical) follow at residues I13–L30, V40–L62, I67–I89, L118–G140, V147–L169, A179–Y199, W253–V271, T281–L303, G334–A356, A361–F378, and Q385–F402.

It localises to the cell membrane. This is an uncharacterized protein from Aquifex aeolicus (strain VF5).